A 162-amino-acid chain; its full sequence is Crossover junction endodeoxyribonuclease RuvC (162 aa).

Residues aspartate 7, glutamate 67, and aspartate 140 contribute to the active site. Mg(2+)-binding residues include aspartate 7, glutamate 67, and aspartate 140.

This sequence belongs to the RuvC family. In terms of assembly, homodimer which binds Holliday junction (HJ) DNA. The HJ becomes 2-fold symmetrical on binding to RuvC with unstacked arms; it has a different conformation from HJ DNA in complex with RuvA. In the full resolvosome a probable DNA-RuvA(4)-RuvB(12)-RuvC(2) complex forms which resolves the HJ. It depends on Mg(2+) as a cofactor.

It localises to the cytoplasm. It catalyses the reaction Endonucleolytic cleavage at a junction such as a reciprocal single-stranded crossover between two homologous DNA duplexes (Holliday junction).. The RuvA-RuvB-RuvC complex processes Holliday junction (HJ) DNA during genetic recombination and DNA repair. Endonuclease that resolves HJ intermediates. Cleaves cruciform DNA by making single-stranded nicks across the HJ at symmetrical positions within the homologous arms, yielding a 5'-phosphate and a 3'-hydroxyl group; requires a central core of homology in the junction. The consensus cleavage sequence is 5'-(A/T)TT(C/G)-3'. Cleavage occurs on the 3'-side of the TT dinucleotide at the point of strand exchange. HJ branch migration catalyzed by RuvA-RuvB allows RuvC to scan DNA until it finds its consensus sequence, where it cleaves and resolves the cruciform DNA. The protein is Crossover junction endodeoxyribonuclease RuvC of Pseudothermotoga lettingae (strain ATCC BAA-301 / DSM 14385 / NBRC 107922 / TMO) (Thermotoga lettingae).